Here is a 225-residue protein sequence, read N- to C-terminus: uncharacterized protein (225 aa).

Residues 12–32 (AGFMMIFVFVIASFLLVLLFF) traverse the membrane as a helical segment.

The protein resides in the cell membrane. This is an uncharacterized protein from Bacillus subtilis (strain 168).